We begin with the raw amino-acid sequence, 502 residues long: Actin-binding protein WASF3 (502 aa).

Residues 57-93 (NEANNFYIRANSLQDRIDRLAVKVTQLDSTVEEVSLQ) are a coiled coil. The residue at position 151 (Y151) is a Phosphotyrosine; by ABL1. Residues 162 to 206 (KEKMLQDTEDKRKEKRRQKEQKRIDGTTREVKKVRKARNRRQEWN) adopt a coiled-coil conformation. Disordered stretches follow at residues 169 to 210 (TEDK…MMAY) and 223 to 443 (SVYH…ARSD). A compositionally biased stretch (basic and acidic residues) spans 182–192 (QKRIDGTTREV). A compositionally biased stretch (polar residues) spans 223 to 237 (SVYHGASSEGSLSPD). At Y248 the chain carries Phosphotyrosine; by ABL1. Positions 302–312 (QQPPPPPPPQA) are enriched in pro residues. Position 337 is a phosphotyrosine; by ABL1 (Y337). Composition is skewed to pro residues over residues 341–352 (SGPPPPPPPPVI) and 394–410 (APPPPGPPPPPPGPPGP). A compositionally biased stretch (low complexity) spans 411–423 (GSSLSSSPMHGPP). The 18-residue stretch at 440–457 (ARSDLLAAIRMGIQLKKV) folds into the WH2 domain. Y486 carries the phosphotyrosine; by ABL1 modification.

It belongs to the SCAR/WAVE family. Binds actin and the Arp2/3 complex. Post-translationally, phosphorylation by ABL1 promotes lamellipodia formation and cell migration. As to expression, expressed in ovary and brain.

It localises to the cytoplasm. It is found in the cytoskeleton. In terms of biological role, downstream effector molecules involved in the transmission of signals from tyrosine kinase receptors and small GTPases to the actin cytoskeleton. Plays a role in the regulation of cell morphology and cytoskeletal organization. Required in the control of cell shape. The protein is Actin-binding protein WASF3 (WASF3) of Homo sapiens (Human).